An 834-amino-acid polypeptide reads, in one-letter code: Protein SEY1 (834 aa).

The segment at 1-26 (MSNVPSPTVTLEGDSPDAAHEAVSSS) is disordered. At 1–733 (MSNVPSPTVT…KRSIMQHVTQ (733 aa)) the chain is on the cytoplasmic side. Positions 63 to 296 (PGDYRIISVF…SESFLFKPNY (234 aa)) constitute a GB1/RHD3-type G domain. 73–80 (GSQSTGKS) is a binding site for GTP. A coiled-coil region spans residues 659 to 688 (VRDKKLKRQYETVREEKEAEEEDEDEWDSE). Positions 670-689 (TVREEKEAEEEDEDEWDSED) are disordered. Positions 676–689 (EAEEEDEDEWDSED) are enriched in acidic residues. The helical transmembrane segment at 734 to 754 (IPYYIYIVILVLGWNEFMAIL) threads the bilayer. Topologically, residues 755–757 (RNP) are lumenal. Residues 758 to 778 (FFFTLLIMLAGATYVMYSMNL) traverse the membrane as a helical segment. Topologically, residues 779–834 (LGPASIVVQRMANEALGLAKEKLREFVVDDHMQHGHNMKKMTTNDIELDDLSEEST) are cytoplasmic.

It belongs to the TRAFAC class dynamin-like GTPase superfamily. GB1/RHD3 GTPase family. RHD3 subfamily.

The protein localises to the endoplasmic reticulum membrane. Its function is as follows. Cooperates with the reticulon proteins and tubule-shaping DP1 family proteins to generate and maintain the structure of the tubular endoplasmic reticulum network. Has GTPase activity, which is required for its function in ER organization. The chain is Protein SEY1 from Clavispora lusitaniae (strain ATCC 42720) (Yeast).